Reading from the N-terminus, the 1030-residue chain is uncharacterized protein (1030 aa).

The span at 1-15 (MSENSTDSKNFQFSE) shows a compositional bias: polar residues. Residues 1 to 53 (MSENSTDSKNFQFSEGSRESSNDELKVLLRDTETKEDEKSSFSNSEEESIIEN) are disordered. The span at 16–40 (GSRESSNDELKVLLRDTETKEDEKS) shows a compositional bias: basic and acidic residues. A Phosphoserine modification is found at S41. Positions 134-290 (IKCVERMESV…WISEIHKQPC (157 aa)) constitute a Helicase ATP-binding domain. 147–154 (AHTSAGKT) is a binding site for ATP. Positions 238-241 (DEVH) match the DEVH box motif. In terms of domain architecture, Helicase C-terminal spans 357–561 (SLERIINMVL…GMILNLMRIE (205 aa)).

This sequence belongs to the helicase family. SKI2 subfamily.

It is found in the nucleus. This is an uncharacterized protein from Schizosaccharomyces pombe (strain 972 / ATCC 24843) (Fission yeast).